Reading from the N-terminus, the 272-residue chain is Phosphate import ATP-binding protein PstB (272 aa).

One can recognise an ABC transporter domain in the interval 26–267 (VAARNLNFYY…PADRRTQDYI (242 aa)). Residue 58-65 (GPSGCGKS) coordinates ATP.

The protein belongs to the ABC transporter superfamily. Phosphate importer (TC 3.A.1.7) family. The complex is composed of two ATP-binding proteins (PstB), two transmembrane proteins (PstC and PstA) and a solute-binding protein (PstS).

The protein localises to the cell inner membrane. The catalysed reaction is phosphate(out) + ATP + H2O = ADP + 2 phosphate(in) + H(+). Its function is as follows. Part of the ABC transporter complex PstSACB involved in phosphate import. Responsible for energy coupling to the transport system. The sequence is that of Phosphate import ATP-binding protein PstB from Nitrobacter hamburgensis (strain DSM 10229 / NCIMB 13809 / X14).